Reading from the N-terminus, the 523-residue chain is Bifunctional purine biosynthesis protein PurH (523 aa).

The 150-residue stretch at 1–150 folds into the MGS-like domain; sequence MSDVVPVRNA…KNHGDVAIAT (150 aa).

It belongs to the PurH family.

It catalyses the reaction (6R)-10-formyltetrahydrofolate + 5-amino-1-(5-phospho-beta-D-ribosyl)imidazole-4-carboxamide = 5-formamido-1-(5-phospho-D-ribosyl)imidazole-4-carboxamide + (6S)-5,6,7,8-tetrahydrofolate. The catalysed reaction is IMP + H2O = 5-formamido-1-(5-phospho-D-ribosyl)imidazole-4-carboxamide. Its pathway is purine metabolism; IMP biosynthesis via de novo pathway; 5-formamido-1-(5-phospho-D-ribosyl)imidazole-4-carboxamide from 5-amino-1-(5-phospho-D-ribosyl)imidazole-4-carboxamide (10-formyl THF route): step 1/1. It functions in the pathway purine metabolism; IMP biosynthesis via de novo pathway; IMP from 5-formamido-1-(5-phospho-D-ribosyl)imidazole-4-carboxamide: step 1/1. The chain is Bifunctional purine biosynthesis protein PurH from Rhodopirellula baltica (strain DSM 10527 / NCIMB 13988 / SH1).